Here is a 902-residue protein sequence, read N- to C-terminus: Ribonuclease E (902 aa).

The S1 motif domain occupies 39–119 (SNIYKGKITR…GTKGAALTTF (81 aa)). Mg(2+) contacts are provided by aspartate 303 and aspartate 346. Zn(2+) contacts are provided by cysteine 404 and cysteine 407. A required for zinc-mediated homotetramerization and catalytic activity region spans residues 404–407 (CPRC). The tract at residues 881 to 902 (GKNSAGVHSATNFSNSPVSKLK) is disordered. Polar residues predominate over residues 889-902 (SATNFSNSPVSKLK).

This sequence belongs to the RNase E/G family. RNase E subfamily. Component of the RNA degradosome, which is a multiprotein complex involved in RNA processing and mRNA degradation. Within the RNA degradosome, RNase E assembles into a homotetramer formed by a dimer of dimers. Requires Zn(2+) as cofactor. Mg(2+) serves as cofactor.

It localises to the cytoplasm. Its subcellular location is the cell inner membrane. It catalyses the reaction Endonucleolytic cleavage of single-stranded RNA in A- and U-rich regions.. In terms of biological role, endoribonuclease that plays a central role in RNA processing and decay. Required for the maturation of 5S and 16S rRNAs and the majority of tRNAs. Also involved in the degradation of most mRNAs. The chain is Ribonuclease E from Buchnera aphidicola subsp. Acyrthosiphon pisum (strain APS) (Acyrthosiphon pisum symbiotic bacterium).